The chain runs to 296 residues: MAHVLCNRARLVSYLPGFCSLVKRVINPRAFSTAGSSGSDESHVATAPPDICSRTVWPDETMGPFGPQDQRFQLPGNIGFDCHLNGTASQKKSQAHKTLPDVLAEPLSTERHEFVMAQYVNEFQDSNAPVEQEISSAETYFESARVECAIQTCPELLRRDFESLFPEVANSKLMILTVTQKTEHDMTVWSEEVEVEREALLEKFINGAKEICYALRAEGYWADFIDPSSGLAFFGPYTNNTLFETDERYRHLGFSVDDLGCCKVIRHGLWGTHVVVGSIFTNATADSHIMRKLSGD.

The N-terminal 38 residues, 1 to 38, are a transit peptide targeting the mitochondrion; the sequence is MAHVLCNRARLVSYLPGFCSLVKRVINPRAFSTAGSSG. The residue at position 203 (Lys-203) is an N6-acetyllysine.

In terms of assembly, heterodimer with MMACHC. Forms a multiprotein complex with MMACHC, MTR and MTRR.

It is found in the cytoplasm. Its subcellular location is the mitochondrion. Functionally, involved in cobalamin metabolism and trafficking. Plays a role in regulating the biosynthesis and the proportion of two coenzymes, methylcob(III)alamin (MeCbl) and 5'-deoxyadenosylcobalamin (AdoCbl). Promotes oxidation of cob(II)alamin bound to MMACHC. The processing of cobalamin in the cytosol occurs in a multiprotein complex composed of at least MMACHC, MMADHC, MTRR (methionine synthase reductase) and MTR (methionine synthase) which may contribute to shuttle safely and efficiently cobalamin towards MTR in order to produce methionine. This Rattus norvegicus (Rat) protein is Cobalamin trafficking protein CblD (Mmadhc).